A 187-amino-acid chain; its full sequence is Elongation factor P (187 aa).

The protein belongs to the elongation factor P family.

The protein resides in the cytoplasm. It participates in protein biosynthesis; polypeptide chain elongation. Functionally, involved in peptide bond synthesis. Stimulates efficient translation and peptide-bond synthesis on native or reconstituted 70S ribosomes in vitro. Probably functions indirectly by altering the affinity of the ribosome for aminoacyl-tRNA, thus increasing their reactivity as acceptors for peptidyl transferase. The sequence is that of Elongation factor P from Treponema denticola (strain ATCC 35405 / DSM 14222 / CIP 103919 / JCM 8153 / KCTC 15104).